The following is a 332-amino-acid chain: MPKRRDILAIVLIVLPWTLLITVWHQSTLAPLLAVHKDEGSDPRRETPPGADPREYCMSDRDIVEVVRTEYVYTRPPPWSDTLPTIHVVTPTYSRPVQKAELTRMANTLLHVPNLHWLVVEDAPRRTPLTARLLRDTGLNYTHLHVETPRNYKLRGDARDPRIPRGTMQRNLALRWLRETFPRNSSQPGVVYFADDDNPYSLELFQKVTRRVSVWPVAFVGGLRYEAPRVNGAGKVVGWKTVFDPHRPFAIDMAGFAVNLRLILQRSQAYFKLRGVKGGYQESSLLRELVTLNDLEPKAANCTKILVWHTRTEKPVLVNEGKKGFTDPSVEI.

Residues 1 to 6 (MPKRRD) lie on the Cytoplasmic side of the membrane. Residues 3–5 (KRR) are essential for transport from endoplasmic reticulum to Golgi apparatus and interaction with SAR1A. The chain crosses the membrane as a helical; Signal-anchor for type II membrane protein span at residues 7–27 (ILAIVLIVLPWTLLITVWHQS). Residues 28 to 332 (TLAPLLAVHK…KGFTDPSVEI (305 aa)) are Lumenal-facing. A UDP-alpha-D-glucuronate-binding site is contributed by 91–93 (PTY). Residues T103 and T108 each carry the phosphothreonine modification. D122 is a UDP-alpha-D-glucuronate binding site. N-linked (GlcNAc...) asparagine glycosylation occurs at N140. UDP-alpha-D-glucuronate contacts are provided by R165 and R170. Residue N184 is glycosylated (N-linked (GlcNAc...) asparagine). 195-197 (DDD) contacts UDP-alpha-D-glucuronate. D197 lines the Mn(2+) pocket. Residues 243–252 (FDPHRPFAID) form an interaction with galactose moiety of substrate glycoprotein region. Residue E282 is the Proton donor/acceptor of the active site. N301 carries N-linked (GlcNAc...) asparagine glycosylation. 309-311 (HTR) contacts UDP-alpha-D-glucuronate.

The protein belongs to the glycosyltransferase 43 family. Homodimer. Interacts with SAR1A. Mn(2+) serves as cofactor. In terms of processing, the soluble form derives from the membrane form by proteolytic processing.

The protein localises to the golgi apparatus membrane. The protein resides in the secreted. It carries out the reaction 3-O-(beta-D-galactosyl-(1-&gt;3)-beta-D-galactosyl-(1-&gt;4)-beta-D-xylosyl)-L-seryl-[protein] + UDP-alpha-D-glucuronate = 3-O-(beta-D-GlcA-(1-&gt;3)-beta-D-Gal-(1-&gt;3)-beta-D-Gal-(1-&gt;4)-beta-D-Xyl)-L-seryl-[protein] + UDP + H(+). It functions in the pathway protein modification; protein glycosylation. In terms of biological role, involved in the biosynthesis of L2/HNK-1 carbohydrate epitope on glycoproteins. Can also play a role in glycosaminoglycan biosynthesis. Substrates include asialo-orosomucoid (ASOR), asialo-fetuin, and asialo-neural cell adhesion molecule. Requires sphingomyelin for activity: stearoyl-sphingomyelin was the most effective, followed by palmitoyl-sphingomyelin and lignoceroyl-sphingomyelin. Activity was demonstrated only for sphingomyelin with a saturated fatty acid and not for that with an unsaturated fatty acid, regardless of the length of the acyl group. This is Galactosylgalactosylxylosylprotein 3-beta-glucuronosyltransferase 1 from Pan troglodytes (Chimpanzee).